The chain runs to 602 residues: Isocitrate dehydrogenase kinase/phosphatase (602 aa).

Residues 325-331 and lysine 346 contribute to the ATP site; that span reads APGIKGM. The active site involves aspartate 381.

Belongs to the AceK family.

It localises to the cytoplasm. It carries out the reaction L-seryl-[isocitrate dehydrogenase] + ATP = O-phospho-L-seryl-[isocitrate dehydrogenase] + ADP + H(+). Bifunctional enzyme which can phosphorylate or dephosphorylate isocitrate dehydrogenase (IDH) on a specific serine residue. This is a regulatory mechanism which enables bacteria to bypass the Krebs cycle via the glyoxylate shunt in response to the source of carbon. When bacteria are grown on glucose, IDH is fully active and unphosphorylated, but when grown on acetate or ethanol, the activity of IDH declines drastically concomitant with its phosphorylation. This chain is Isocitrate dehydrogenase kinase/phosphatase, found in Paracidovorax citrulli (strain AAC00-1) (Acidovorax citrulli).